The sequence spans 93 residues: MSLPEILPLEVIDKTINQKVLIVLQSNREFEGTLVGFDDFVNVILEDAVEWLIDPEDESRNEKVMQHHGRMLLSGNNIAILVPGGKKTPTEAL.

Residues 7-87 (LPLEVIDKTI…IAILVPGGKK (81 aa)) form the Sm domain.

This sequence belongs to the snRNP Sm proteins family. As to quaternary structure, component of the heptameric LSM1-LSM7 complex that forms a seven-membered ring structure with a donut shape. The LSm subunits are arranged in the order LSM1, LSM2, LSM3, LSM6, LSM5, LSM7 and LSM4. Except for LSM1, where a C-terminal helix crosses the ring structure to form additional interactions with LSM3 and LSM6, each subunit interacts only with its two neighboring subunits. The LSM1-LSM7 complex interacts with PAT1; within the complex PAT1 has direct interactions with LSM2 and LSM3. The LSM1-LSM7 complex interacts with XRN1. Component of the heptameric LSM2-LSM8 complex that forms a seven-membered ring structure with a donut shape; an RNA strand can pass through the hole in the center of the ring structure. The LSm subunits are arranged in the order LSM8, LSM2, LSM3, LSM6, LSM5, LSM7 and LSM4. Component of the spliceosome U4/U6-U5 tri-snRNP complex composed of the U4, U6 and U5 snRNAs and at least PRP3, PRP4, PRP6, PRP8, PRP18, PRP31, PRP38, SNU13, SNU23, SNU66, SNU114, SPP381, SMB1, SMD1, SMD2, SMD3, SMX2, SMX3, LSM2, LSM3, LSM4, LSM5, LSM6, LSM7, LSM8, BRR2 and DIB1. May be found in a complex comprising LSM2-LSM7 without LSM1 or LSM8; the complex associates with pre-P RNA and snoRNA SNR5.

Its subcellular location is the nucleus. The protein localises to the nucleolus. It localises to the cytoplasm. Functionally, component of LSm protein complexes, which are involved in RNA processing and may function in a chaperone-like manner. Component of the cytoplasmic LSM1-LSM7 complex which is involved in mRNA degradation by activating the decapping step. Together with PAT1, the LSM1-LSM7 complex binds to osmotic stress-activated mRNAs to attenuate the osmotic stress response, probably by limiting ribosome access to the mRNA and consequently translation. Component of the nuclear LSM2-LSM8 complex, which is involved in spliceosome assembly. The LSM2-LSM8 complex plays a role in the biogenesis of the spliceosomal U4/U6-U5 tri-snRNP complex by accelerating PRP24-mediated annealing of U4/U6 di-snRNA. The LSM2-LSM8 complex binds U6 snRNA terminating with a non-cyclic 3' phosphate group. LSM2-LSM8 is probably also involved in degradation of nuclear pre-mRNA by targeting them for decapping. LSM2-LSM8 could be involved in processing of pre-tRNAs, pre-rRNAs and U3 snoRNA, although involvement may be indirect. In a complex that probably contains LSM2-LSM7, but not LSM1 or LSM8, associates with the precursor of the RNA component of RNase P (pre-P RNA) and may be involved in maturing pre-P RNA; the complex also associates with snoRNA SNR5. This chain is LSM complex subunit LSM5 (LSM5), found in Saccharomyces cerevisiae (strain ATCC 204508 / S288c) (Baker's yeast).